A 315-amino-acid chain; its full sequence is Protein sprouty homolog 2 (315 aa).

Positions 1–15 are enriched in polar residues; that stretch reads MEARAQSGNGSQPLL. Disordered stretches follow at residues 1-39 and 51-140; these read MEARAQSGNGSQPLLQTPRDGGRQRGEPDPRDALTQQVH and NTNE…GSSF. A compositionally biased stretch (basic and acidic residues) spans 20–32; sequence DGGRQRGEPDPRD. Over residues 108–140 the composition is skewed to low complexity; it reads SRSISTVSSGSRSSTRTSTSSSSSEQRLLGSSF. The interval 118–315 is required for interaction with CAV1; the sequence is SRSSTRTSTS…VPPRNFEKPT (198 aa). Positions 177–291 constitute an SPR domain; sequence RCEDCGKCKC…CYDRVNRPGC (115 aa). The tract at residues 178–315 is required for interaction with TESK1; that stretch reads CEDCGKCKCK…VPPRNFEKPT (138 aa).

This sequence belongs to the sprouty family. Forms heterodimers with SPRY1. Forms a tripartite complex containing GAB1, METTL13 and SPRY2. Within the complex interacts with METTL13. Interacts with RAF1. Interacts (via C-terminus) with TESK1 (via C-terminus); the interaction disrupts SPRY2 interaction with GRB2, potentially via disruption of SPRY2 serine dephosphorylation. Interacts with PPP2R1A/PP2A-A and PPP2CA/PP2A-C; the interaction with PPP2CA/PP2A-C is inhibited by interaction with TESK1, possibly by vesicular sequestration of SPRY2. Inhibition of the interaction with the serine/threonine-protein phosphatase 2A (PP2A) holoenzyme results in loss of PP2A-mediated dephosphorylation, resulting in the loss of SPRY2 interaction with GRB2. Interacts with GRB2. Interacts with CBL/C-CBL; the interaction inhibits CBL-mediated ubiquitination of EGFR. Interacts (via C-terminus) with CAV1 (via C-terminus). Cleaved at Pro-144 by the prolyl endopeptidase FAP (seprase) activity (in vitro).

It is found in the cytoplasm. The protein resides in the cytoskeleton. The protein localises to the cell projection. It localises to the ruffle membrane. In terms of biological role, antagonist of fibroblast growth factor (FGF) pathways via inhibition of FGF-mediated phosphorylation of ERK1/2. Thereby acts as an antagonist of FGF-induced retinal lens fiber differentiation, may inhibit limb bud outgrowth and may negatively modulate respiratory organogenesis. Inhibits TGFB-induced epithelial-to-mesenchymal transition in retinal lens epithelial cells. Inhibits CBL/C-CBL-mediated EGFR ubiquitination. The polypeptide is Protein sprouty homolog 2 (SPRY2) (Macaca fascicularis (Crab-eating macaque)).